Here is a 326-residue protein sequence, read N- to C-terminus: Protein BCCIP homolog (326 aa).

Residues 37-81 form a disordered region; it reads SHPEDCQCSDEDISFDEKQKIPNLPRKGKEEQVSDSSDEEDSQED. The residue at position 45 (S45) is a Phosphoserine. Positions 72–81 are enriched in acidic residues; sequence SSDEEDSQED.

It belongs to the BCP1 family.

This Arabidopsis thaliana (Mouse-ear cress) protein is Protein BCCIP homolog.